The following is a 59-amino-acid chain: MLTWALIFFIIAIIAAAFGFGGIAVAAAGIAKILFFLFLVMFVIFLIMGLVGRRGPPPV.

Transmembrane regions (helical) follow at residues 5–25 (ALIF…GIAV) and 30–50 (IAKI…IMGL).

This sequence belongs to the UPF0391 family.

The protein resides in the cell membrane. This chain is UPF0391 membrane protein lpp2589, found in Legionella pneumophila (strain Paris).